The chain runs to 385 residues: tRNA-specific 2-thiouridylase MnmA (385 aa).

ATP is bound by residues 18–25 and Leu-44; that span reads AMSGGVDS. Residue Cys-112 is the Nucleophile of the active site. A disulfide bridge links Cys-112 with Cys-209. Gly-136 provides a ligand contact to ATP. The interval 159 to 161 is interaction with tRNA; sequence RDQ. Cys-209 serves as the catalytic Cysteine persulfide intermediate.

Belongs to the MnmA/TRMU family.

It localises to the cytoplasm. It catalyses the reaction S-sulfanyl-L-cysteinyl-[protein] + uridine(34) in tRNA + AH2 + ATP = 2-thiouridine(34) in tRNA + L-cysteinyl-[protein] + A + AMP + diphosphate + H(+). Functionally, catalyzes the 2-thiolation of uridine at the wobble position (U34) of tRNA, leading to the formation of s(2)U34. The polypeptide is tRNA-specific 2-thiouridylase MnmA (Methylorubrum extorquens (strain PA1) (Methylobacterium extorquens)).